The following is a 697-amino-acid chain: MIAAVEKDAVPRKRRVISQVSQACIRCRQKKIKCSGEKPSCQACSNNKVECIWPDRPNMRGKKPSSAARTLSPLTGIVQPYLGSHPFSPTILSPSSPNMDFTYSINSFGDYQKQLRLPTSRKLLQLWDIFLKTSYTELFGIFNKAQITSQIASDTAPPVLVLCICAHAARFSQEEVNRFKSSTAASDYYANQAFSLLPCRFQDISLTNITCLLLLCLIELGSCRGAKAWLLLGMALRMVDSLDLGNEINDNPLTMGSNTVSWTEAEQKRRVYWACFFVERLLSTGYMAPSKLRSLSLSLQKTSIQLPCPEPNFLFNQPILTELFDGSLPENTQSDTTSMAPYQRSLQLEFMTGSLIRLSNLWSEISRWALCGGYTKDITPPWLNQSQFHRSFELLKAWHENLPPRAVWSYTNYSAYSSPGESAGACYTFMHLLYHTTLTYLLRNVLDLFPEKSRQKSKLFSSVSQRFGQQPPTVWMDMILDQVITSADFITKLSKDPLNYIMSPFVGFSILTAATIHMLLKFCVVNIDQNYISSSRLVHVDHQILQDRSKYWKINQAMLVTLQRLYNFYRFQYLEEQSLYNFKIPGFPLCILEYGIVEDQSMKSNPDLNSFSKELFSRGTNELLNNGDDTQSGNSTPAMGVSEIRTDTILDEEVPVDPLITSILDDGRWWEEMFGSERKAGFKETVFEDMNGRSIRL.

Residues 24–51 (CIRCRQKKIKCSGEKPSCQACSNNKVEC) constitute a DNA-binding region (zn(2)-C6 fungal-type). The chain crosses the membrane as a helical span at residues 500 to 520 (YIMSPFVGFSILTAATIHMLL).

It is found in the nucleus membrane. This is an uncharacterized protein from Schizosaccharomyces pombe (strain 972 / ATCC 24843) (Fission yeast).